The chain runs to 151 residues: Proline-rich acidic protein 1 (151 aa).

A signal peptide spans M1 to A20. The segment at L71–Q151 is disordered.

As to quaternary structure, interacts with isoform 1 and isoform 3 of MAD1L1. Interacts with MTTP. As to expression, highly expressed in the intestinal epithelial cells (at protein level). Abundantly expressed in the epithelial cells of the liver, kidney and cervix. Significantly down-regulated in hepatocellular carcinoma and right colon adenocarcinoma compared with the respective adjacent normal tissues. Expressed in epididymis (at protein level).

The protein localises to the secreted. It is found in the endoplasmic reticulum. Its function is as follows. Lipid-binding protein which promotes lipid absorption by facilitating MTTP-mediated lipid transfer (mainly triglycerides and phospholipids) and MTTP-mediated apoB lipoprotein assembly and secretion. Protects the gastrointestinal epithelium from irradiation-induced apoptosis. May play an important role in maintaining normal growth homeostasis in epithelial cells. Involved in p53/TP53-dependent cell survival after DNA damage. May down-regulate the expression of MAD1L1 and exert a suppressive role in mitotic spindle assembly checkpoint in hepatocellular carcinomas. The chain is Proline-rich acidic protein 1 (PRAP1) from Homo sapiens (Human).